A 162-amino-acid polypeptide reads, in one-letter code: UPF0262 protein AZC_3148 (162 aa).

It belongs to the UPF0262 family.

This Azorhizobium caulinodans (strain ATCC 43989 / DSM 5975 / JCM 20966 / LMG 6465 / NBRC 14845 / NCIMB 13405 / ORS 571) protein is UPF0262 protein AZC_3148.